The following is a 301-amino-acid chain: MIYLHAIDPIAFSLGPVKVHWYGLMYLASFGAAWCLGRQRIQAGRLLGVNMDGFSDLLFYAMMGVVLGGRVGYMLFYAFHDFLQEPLLLFRVWEGGMSFHGGLIGVLLAVAWWSRRHRLQMFDVLDFGAPLVPVGLGFGRLGNFIGGELWGKLTHNGWGVIFPRAPLSDVPAGQLAMQDVMNFVQIQEHYAAGLLGHYARHPSQLYEAFLEGLVMFIVLWLFSRKPRPRYAVSGLFALLYGVFRFLVEFVRMPDNGVYVAFGWLTRGQILSLPLIVIGLFLFWLSCRSPVLQPVPAPEVAK.

A run of 4 helical transmembrane segments spans residues 10-30 (IAFS…LASF), 57-77 (LLFY…MLFY), 92-112 (VWEG…AVAW), and 119-139 (LQMF…LGFG). Arg140 contacts a 1,2-diacyl-sn-glycero-3-phospho-(1'-sn-glycerol). 3 consecutive transmembrane segments (helical) span residues 202–222 (PSQL…LWLF), 230–250 (YAVS…VEFV), and 264–284 (LTRG…LFWL).

The protein belongs to the Lgt family.

The protein localises to the cell inner membrane. The enzyme catalyses L-cysteinyl-[prolipoprotein] + a 1,2-diacyl-sn-glycero-3-phospho-(1'-sn-glycerol) = an S-1,2-diacyl-sn-glyceryl-L-cysteinyl-[prolipoprotein] + sn-glycerol 1-phosphate + H(+). It participates in protein modification; lipoprotein biosynthesis (diacylglyceryl transfer). Catalyzes the transfer of the diacylglyceryl group from phosphatidylglycerol to the sulfhydryl group of the N-terminal cysteine of a prolipoprotein, the first step in the formation of mature lipoproteins. This is Phosphatidylglycerol--prolipoprotein diacylglyceryl transferase from Xylella fastidiosa (strain 9a5c).